A 79-amino-acid polypeptide reads, in one-letter code: Sulfur carrier protein TusA (79 aa).

Cysteine 17 acts as the Cysteine persulfide intermediate in catalysis.

Belongs to the sulfur carrier protein TusA family.

It localises to the cytoplasm. Sulfur carrier protein which probably makes part of a sulfur-relay system. This chain is Sulfur carrier protein TusA, found in Idiomarina loihiensis (strain ATCC BAA-735 / DSM 15497 / L2-TR).